Reading from the N-terminus, the 324-residue chain is Acetyl-coenzyme A carboxylase carboxyl transferase subunit alpha (324 aa).

The region spanning 37-291 is the CoA carboxyltransferase C-terminal domain; the sequence is KLDKRLDRLK…QEYVLQEWLK (255 aa).

The protein belongs to the AccA family. In terms of assembly, acetyl-CoA carboxylase is a heterohexamer composed of biotin carboxyl carrier protein (AccB), biotin carboxylase (AccC) and two subunits each of ACCase subunit alpha (AccA) and ACCase subunit beta (AccD).

It is found in the cytoplasm. It catalyses the reaction N(6)-carboxybiotinyl-L-lysyl-[protein] + acetyl-CoA = N(6)-biotinyl-L-lysyl-[protein] + malonyl-CoA. The protein operates within lipid metabolism; malonyl-CoA biosynthesis; malonyl-CoA from acetyl-CoA: step 1/1. Functionally, component of the acetyl coenzyme A carboxylase (ACC) complex. First, biotin carboxylase catalyzes the carboxylation of biotin on its carrier protein (BCCP) and then the CO(2) group is transferred by the carboxyltransferase to acetyl-CoA to form malonyl-CoA. This chain is Acetyl-coenzyme A carboxylase carboxyl transferase subunit alpha, found in Chlamydia trachomatis serovar D (strain ATCC VR-885 / DSM 19411 / UW-3/Cx).